Reading from the N-terminus, the 641-residue chain is Chaperone protein HtpG (641 aa).

The a; substrate-binding stretch occupies residues 1 to 351 (MTQSVHAETH…SNDLPLNVSR (351 aa)). Residues 352–568 (EILQDNKVTV…AHGMSTQMIK (217 aa)) are b. The segment at 569–641 (LMRAAGQPVP…SRINRLLLQA (73 aa)) is c.

The protein belongs to the heat shock protein 90 family. As to quaternary structure, homodimer.

The protein localises to the cytoplasm. In terms of biological role, molecular chaperone. Has ATPase activity. This is Chaperone protein HtpG from Aeromonas hydrophila subsp. hydrophila (strain ATCC 7966 / DSM 30187 / BCRC 13018 / CCUG 14551 / JCM 1027 / KCTC 2358 / NCIMB 9240 / NCTC 8049).